Reading from the N-terminus, the 428-residue chain is Spliceosome RNA helicase DDX39B (428 aa).

Residues 1-19 show a composition bias toward acidic residues; it reads MAENDVDNELLDYEEDEVE. Residues 1 to 32 form a disordered region; sequence MAENDVDNELLDYEEDEVETAAGGDGSEAPAK. An N-acetylalanine modification is found at Ala-2. At Lys-36 the chain carries N6-acetyllysine; alternate. A Glycyl lysine isopeptide (Lys-Gly) (interchain with G-Cter in SUMO2); alternate cross-link involves residue Lys-36. Residues Ser-38 and Ser-41 each carry the phosphoserine modification. Positions 45–73 match the Q motif motif; that stretch reads SGFRDFLLKPELLRAIVDCGFEHPSEVQH. One can recognise a Helicase ATP-binding domain in the interval 76-249; it reads IPQAILGMDV…RKFMQDPMEI (174 aa). Residue 89 to 96 coordinates ATP; sequence AKSGMGKT. The residue at position 172 (Thr-172) is a Phosphothreonine. The short motif at 196–199 is the DECD box element; it reads DECD. Residues 261 to 422 enclose the Helicase C-terminal domain; sequence GLQQYYVKLK…ELPDEIDISS (162 aa).

This sequence belongs to the DEAD box helicase family. DECD subfamily. Homodimer, and heterodimer with DDX39A. DDX39B interacts with the THO subcomplex to form the THO-DDX39B complex which multimerizes into a 28-subunit tetrameric assembly. Component of the transcription/export (TREX) complex at least composed of ALYREF/THOC4, DDX39B, SARNP/CIP29, CHTOP and the THO subcomplex; in the complex interacts with THOC2. THOC1-THOC2-THOC3-DDX39B subcomplex is sufficient for the interaction with export factor NXF1-NXT1. TREX seems to have a dynamic structure involving ATP-dependent remodeling. Within the TREX complex bridges ALYREF/THOC4 and the THO subcomplex, and, in a ATP-dependent manner, ALYREF/THOC4 and SARNP/CIP29. Component of the spliceosome. Interacts directly with U2AF2. Interacts with RBM8A, RNPS1 and SRRM1, FYTTD1/UIF, THOC1, MX1 and POLDIP3. Interacts with LUZP4. Interacts with SARNP/CIP29 (via the C-terminal domain); the interaction is direct and facilitates RNA binding of DDX39B.

Its subcellular location is the nucleus. The protein resides in the nucleus speckle. It localises to the cytoplasm. It carries out the reaction ATP + H2O = ADP + phosphate + H(+). Its function is as follows. Involved in nuclear export of spliced and unspliced mRNA. Component of the TREX complex which is thought to couple mRNA transcription, processing and nuclear export, and specifically associates with spliced mRNA and not with unspliced pre-mRNA. The TREX complex is recruited to spliced mRNAs by a transcription-independent mechanism, binds to mRNA upstream of the exon-junction complex (EJC) and is recruited in a splicing- and cap-dependent manner to a region near the 5' end of the mRNA where it functions in mRNA export to the cytoplasm via the TAP/NXF1 pathway. The THOC1-THOC2-THOC3 core complex alone is sufficient to promote ATPase activity of DDX39B; in the complex THOC2 is the only component that directly interacts with DDX39B. Associates with SARNP/CIP29, which facilitates RNA binding of DDX39B and likely plays a role in mRNA export. May undergo several rounds of ATP hydrolysis during assembly of TREX to drive subsequent loading of components such as ALYREF/THOC4 and CHTOP onto mRNA. Also associates with pre-mRNA independent of ALYREF/THOC4. Involved in the nuclear export of intronless mRNA; the ATP-bound form is proposed to recruit export adapter ALYREF/THOC4 to intronless mRNA; its ATPase activity is cooperatively stimulated by RNA and ALYREF/THOC4 and ATP hydrolysis is thought to trigger the dissociation from RNA to allow the association of ALYREF/THOC4 and the NXF1-NXT1 heterodimer. Involved in transcription elongation and genome stability. Splice factor that is required for the first ATP-dependent step in spliceosome assembly and for the interaction of U2 snRNP with the branchpoint. Has both RNA-stimulated ATP binding/hydrolysis activity and ATP-dependent RNA unwinding activity. Even with the stimulation of RNA, the ATPase activity is weak. Can only hydrolyze ATP but not other NTPs. The RNA stimulation of ATPase activity does not have a strong preference for the sequence and length of the RNA. However, ssRNA stimulates the ATPase activity much more strongly than dsRNA. Can unwind 5' or 3' overhangs or blunt end RNA duplexes in vitro. The ATPase and helicase activities are not influenced by U2AF2; the effect of ALYREF/THOC4 is reported conflictingly. The polypeptide is Spliceosome RNA helicase DDX39B (DDX39B) (Canis lupus familiaris (Dog)).